Reading from the N-terminus, the 239-residue chain is Fatty acid metabolism regulator protein (239 aa).

The HTH gntR-type domain occupies 6 to 74 (QSPAGFAEEY…HGKPTKINNF (69 aa)). A DNA-binding region (H-T-H motif) is located at residues 34-53 (ERELSELIGVTRTTLREVLQ).

As to quaternary structure, homodimer.

It is found in the cytoplasm. Multifunctional regulator of fatty acid metabolism. This chain is Fatty acid metabolism regulator protein, found in Pectobacterium atrosepticum (strain SCRI 1043 / ATCC BAA-672) (Erwinia carotovora subsp. atroseptica).